A 540-amino-acid chain; its full sequence is Solute carrier family 2, facilitated glucose transporter member 9 (540 aa).

The tract at residues methionine 1–arginine 31 is disordered. Topologically, residues methionine 1–aspartate 51 are cytoplasmic. Serine 9 bears the Phosphoserine mark. The helical transmembrane segment at tryptophan 52–glycine 72 threads the bilayer. Over tyrosine 73–threonine 107 the chain is Extracellular. Asparagine 90 carries N-linked (GlcNAc...) asparagine glycosylation. Residues leucine 108 to valine 128 traverse the membrane as a helical segment. At lysine 129–threonine 140 the chain is on the cytoplasmic side. Residues leucine 141–alanine 161 traverse the membrane as a helical segment. Residues glycine 162–arginine 171 lie on the Extracellular side of the membrane. The helical transmembrane segment at phenylalanine 172 to isoleucine 192 threads the bilayer. Topologically, residues serine 193–serine 200 are cytoplasmic. The helical transmembrane segment at leucine 201–leucine 221 threads the bilayer. The Extracellular segment spans residues proline 222 to tryptophan 231. A helical membrane pass occupies residues proline 232 to leucine 252. The Cytoplasmic portion of the chain corresponds to proline 253–glutamine 316. Residues valine 317–phenylalanine 337 form a helical membrane-spanning segment. Topologically, residues tyrosine 338 to proline 354 are extracellular. Residues tyrosine 355–isoleucine 375 form a helical membrane-spanning segment. Topologically, residues glutamate 376–arginine 381 are cytoplasmic. A helical membrane pass occupies residues proline 382–leucine 402. Residues threonine 403–serine 415 lie on the Extracellular side of the membrane. Residues isoleucine 416–isoleucine 436 form a helical membrane-spanning segment. The Cytoplasmic portion of the chain corresponds to leucine 437–phenylalanine 451. Residues isoleucine 452–isoleucine 472 form a helical membrane-spanning segment. Residues glutamine 473 to threonine 478 lie on the Extracellular side of the membrane. A helical membrane pass occupies residues tyrosine 479–leucine 499. The Cytoplasmic portion of the chain corresponds to proline 500–proline 540. At serine 515 the chain carries Phosphoserine. A disordered region spans residues lysine 519–proline 540.

Belongs to the major facilitator superfamily. Sugar transporter (TC 2.A.1.1) family. Glucose transporter subfamily. Most strongly expressed in basolateral membranes of proximal renal tubular cells, liver and placenta. Also detected in lung, blood leukocytes, heart skeletal muscle and chondrocytes from articular cartilage. Detected in kidney membrane (at protein level). In terms of tissue distribution, only detected in the apical membranes of polarized renal tubular cells and placenta. Detected in kidney membrane (at protein level).

The protein resides in the cell membrane. The protein localises to the basolateral cell membrane. Its subcellular location is the apical cell membrane. The enzyme catalyses urate(out) = urate(in). With respect to regulation, extracellular glucose and urate accelerate urate efflux. Intracellular urate, glucose and fructose accelerate urate influx. No effect of extracellular urate, glucose or fructose on urate efflux. Intracellular urate and fructose slightly accelerate urate influx. Functionally, high-capacity urate transporter, which may play a role in the urate reabsorption by proximal tubules. May have a residual high-affinity, low-capacity glucose and fructose transporter activity. Transports urate at rates 45- to 60-fold faster than glucose. Does not transport galactose. May mediate small uptake of adenine but not of other nucleobases. The protein is Solute carrier family 2, facilitated glucose transporter member 9 of Homo sapiens (Human).